Consider the following 624-residue polypeptide: MEPPDARAGLLWLTLLLSGYSGAQAELHVSVPPRVEVMRGEQIALDCTPREHPENYVLEWLLVDASGARHRLASVEPQGSEFLGTIHNSRGRRPPYKIDSLGRLVIAEAQVGDERDYVCVVKAGAAGTSEATSSVRVFATPEATEVAPNKGTLSVMEQFAQEIATCSSNNGNPVPRITWYQNGQRLDVPMELNSKGYMTSRTVREASGLYSLTSTLYLRLHKEDRDASFHCAAHYDLPSGQHGRLDSHTFRLTLHYPTEHVEFWVGSPSTTEGWVREGDAVQLLCQGDGSPSPEYSFFREQGNQEEQLNVNLKGNLTLEGVHRSQSGIYGCRVEDYDADEEVQLVKKLKLHVAYLDPLELSVPEEFSVFLNSSGTVVNCSARGLPAPIVRWTKDSVTVADGPILSLDSVTFDSAGTYTCEASTPTVPLLSRTQSFQLVVQGAPELKPNEIKPKSGTSWTEGDEVMLTCSARGFPEPKLTWSQRGDTTPAEPPFEGRGWMSSSLTLKVTSALSREGVSCEASNIHGKNGHVFHFGSVAPQTAQAGVAVMAVAVSVGLLLLVVAAFYCMRRKGRPGCCQRAEKGAPPAREPELSHSGSERPEHTGLLMGGPSGGGRGGNGGFGDEC.

The N-terminal stretch at 1-25 (MEPPDARAGLLWLTLLLSGYSGAQA) is a signal peptide. 2 Ig-like V-type domains span residues 26-136 (ELHV…SSVR) and 141-251 (PEAT…HTFR). At 26 to 543 (ELHVSVPPRV…GSVAPQTAQA (518 aa)) the chain is on the extracellular side. 3 cysteine pairs are disulfide-bonded: Cys-47-Cys-119, Cys-166-Cys-231, and Cys-285-Cys-331. Ig-like C2-type domains follow at residues 268 to 343 (PSTT…EEVQ), 357 to 436 (PLEL…QSFQ), and 443 to 534 (PELK…FHFG). 3 N-linked (GlcNAc...) asparagine glycosylation sites follow: Asn-315, Asn-371, and Asn-378. Disulfide bonds link Cys-379–Cys-419 and Cys-468–Cys-518. The interval 477-497 (KLTWSQRGDTTPAEPPFEGRG) is disordered. Residues 544–564 (GVAVMAVAVSVGLLLLVVAAF) form a helical membrane-spanning segment. Residues 565–624 (YCMRRKGRPGCCQRAEKGAPPAREPELSHSGSERPEHTGLLMGGPSGGGRGGNGGFGDEC) lie on the Cytoplasmic side of the membrane. Residues 574–624 (GCCQRAEKGAPPAREPELSHSGSERPEHTGLLMGGPSGGGRGGNGGFGDEC) are disordered. Over residues 587-601 (REPELSHSGSERPEH) the composition is skewed to basic and acidic residues. Residues Ser-592, Ser-594, and Ser-596 each carry the phosphoserine modification. The span at 605–624 (LMGGPSGGGRGGNGGFGDEC) shows a compositional bias: gly residues.

As to quaternary structure, homodimer. Interacts with ITGA4:ITGB1. Interacts with spectrins SPTA1 and SPTB1.

It is found in the cell membrane. Functionally, transmembrane glycoprotein that functions as both a receptor and an adhesion molecule playing a crucial role in cell adhesion, motility, migration and invasion. Extracellular domain enables binding to extracellular matrix proteins, such as laminin, integrin and other ligands while its intracellular domain interacts with cytoskeletal proteins like hemoglobin, facilitating cell signal transduction. Serves as a receptor for laminin alpha-5/LAMA5 to promote cell adhesion. Mechanistically, JAK2 induces BCAM phosphorylation and activates its adhesion to laminin by stimulating a Rap1/AKT signaling pathway in the absence of EPOR. The chain is Basal cell adhesion molecule (Bcam) from Rattus norvegicus (Rat).